The chain runs to 409 residues: LysM domain-containing GPI-anchored protein LYP6 (409 aa).

A signal peptide spans 1–27; sequence MAGWPAAEAAGALVVAILAAAAGGAAG. 4 disulfide bridges follow: Cys-34–Cys-100, Cys-40–Cys-166, Cys-98–Cys-164, and Cys-100–Cys-166. The LysM 1 domain occupies 110–160; sequence VRYSARPADTLASVADVVFAGLASADQIRTANGLSAEDPDAPLDAGATLVV. A glycan (N-linked (GlcNAc...) asparagine) is linked at Asn-168. The 44-residue stretch at 179–222 folds into the LysM 2 domain; that stretch reads LSYVVRVGDTVQSIAATHATTVTDISNVNAMGSPIVAPGDILAI. 2 cysteine pairs are disulfide-bonded: Cys-227/Cys-259 and Cys-254/Cys-282. N-linked (GlcNAc...) asparagine glycosylation is present at Asn-244. 3 N-linked (GlcNAc...) asparagine glycosylation sites follow: Asn-291, Asn-302, and Asn-313. The segment at 353 to 387 is disordered; the sequence is SPAPGAGEAGGDIPGFPGSSNVSPANGPSGSVSQA. Over residues 370-387 the composition is skewed to polar residues; the sequence is GSSNVSPANGPSGSVSQA. Ala-387 carries GPI-anchor amidated alanine lipidation. The propeptide at 388 to 409 is removed in mature form; it reads ASVNRPHQIVALILSVALYFQM.

In terms of assembly, interacts with LYP4. Interacts with CERK1. Interacts with CEBIP. Expressed in roots and leaves.

It localises to the cell membrane. Functionally, functions in innate immunity. Functions as a pattern recognition receptor (PRR), sensing bacterial peptidoglycan (PGN) and fungal chitin at the cell surface. Involved in resistance against the bacterial pathogen Xanthomonas oryzae pv. oryzae (Xoo) and the fungal pathogen Magnaporthe oryzae. Binds PGN and fungal chitin in vitro. Involved in microbe-associated molecular patterns (MAMPs) perception and participates in the activation of defense genes against the bacterial pathogen Xanthomonas oryzae pv. oryzicola (Xoc) or the fungal pathogen Magnaporthe oryzae. The sequence is that of LysM domain-containing GPI-anchored protein LYP6 from Oryza sativa subsp. japonica (Rice).